The sequence spans 69 residues: DNA gyrase inhibitor YacG (69 aa).

Zn(2+) is bound by residues C14, C17, C33, and C37. Residues 46–69 (ADEEKSIPGAPDMSDSDGWSEDQY) form a disordered region. The span at 59-69 (SDSDGWSEDQY) shows a compositional bias: acidic residues.

The protein belongs to the DNA gyrase inhibitor YacG family. Interacts with GyrB. Zn(2+) is required as a cofactor.

Its function is as follows. Inhibits all the catalytic activities of DNA gyrase by preventing its interaction with DNA. Acts by binding directly to the C-terminal domain of GyrB, which probably disrupts DNA binding by the gyrase. The protein is DNA gyrase inhibitor YacG of Aliivibrio fischeri (strain MJ11) (Vibrio fischeri).